A 145-amino-acid polypeptide reads, in one-letter code: D-aminoacyl-tRNA deacylase (145 aa).

The short motif at 137–138 (GP) is the Gly-cisPro motif, important for rejection of L-amino acids element.

It belongs to the DTD family. As to quaternary structure, homodimer.

The protein resides in the cytoplasm. It carries out the reaction glycyl-tRNA(Ala) + H2O = tRNA(Ala) + glycine + H(+). The catalysed reaction is a D-aminoacyl-tRNA + H2O = a tRNA + a D-alpha-amino acid + H(+). Functionally, an aminoacyl-tRNA editing enzyme that deacylates mischarged D-aminoacyl-tRNAs. Also deacylates mischarged glycyl-tRNA(Ala), protecting cells against glycine mischarging by AlaRS. Acts via tRNA-based rather than protein-based catalysis; rejects L-amino acids rather than detecting D-amino acids in the active site. By recycling D-aminoacyl-tRNA to D-amino acids and free tRNA molecules, this enzyme counteracts the toxicity associated with the formation of D-aminoacyl-tRNA entities in vivo and helps enforce protein L-homochirality. In Cereibacter sphaeroides (strain KD131 / KCTC 12085) (Rhodobacter sphaeroides), this protein is D-aminoacyl-tRNA deacylase.